The following is a 1133-amino-acid chain: Envelopment polyprotein (1133 aa).

The N-terminal stretch at Met-1 to Ala-16 is a signal peptide. The Lumenal portion of the chain corresponds to Leu-17–Ala-484. 10 disulfides stabilise this stretch: Cys-61–Cys-155, Cys-107–Cys-126, Cys-131–Cys-136, Cys-173–Cys-183, Cys-208–Cys-245, Cys-232–Cys-349, Cys-374–Cys-433, Cys-378–Cys-387, Cys-403–Cys-422, and Cys-450–Cys-473. An N-linked (GlcNAc...) asparagine; by host glycan is attached at Asn-132. N-linked (GlcNAc...) asparagine; by host glycans are attached at residues Asn-233 and Asn-345. Residue Asn-397 is glycosylated (N-linked (GlcNAc...) asparagine; by host). A helical transmembrane segment spans residues Leu-485–Leu-504. The Cytoplasmic portion of the chain corresponds to Leu-505–Tyr-626. Positions Leu-514–Lys-531 are binding to the ribonucleoprotein. CCHC-type zinc fingers lie at residues Cys-543 to Cys-563 and Cys-568 to Cys-589. Binding to the ribonucleoprotein regions lie at residues Tyr-586 to Val-603, Gln-590 to Lys-601, and Gly-609 to Ser-623. Residues Gly-609–Thr-632 enclose the ITAM domain. The YxxL motif lies at Tyr-613 to Leu-616. Residues Ile-627–Ala-647 form a helical membrane-spanning segment. Residues Glu-648–Val-1105 lie on the Lumenal side of the membrane. 8 disulfide bridges follow: Cys-733/Cys-768, Cys-737/Cys-775, Cys-749/Cys-883, Cys-763/Cys-894, Cys-778/Cys-902, Cys-804/Cys-813, Cys-821/Cys-830, and Cys-861/Cys-865. Residues Tyr-755–Cys-775 form a fusion loop region. N-linked (GlcNAc...) asparagine; by host glycosylation is present at Asn-926. Cystine bridges form between Cys-968–Cys-998, Cys-991–Cys-1043, Cys-1008–Cys-1013, Cys-1044–Cys-1049, and Cys-1083–Cys-1087. A helical transmembrane segment spans residues Val-1106–Cys-1125. The interval Leu-1120–Ser-1133 is binding to the ribonucleoprotein. Over Pro-1126–Ser-1133 the chain is Cytoplasmic.

The protein belongs to the hantavirus envelope glycoprotein family. Homodimer. Homotetramer; forms heterotetrameric Gn-Gc spikes in the pre-fusion conformation. Interacts (via C-terminus) with the nucleoprotein. Interacts with host TUFM; this interaction contributes to the virus-induced degradation of mitochondria by autophagy, which leads to degradation of host MAVS and inhibition of type I interferon (IFN) responses. Interacts with host MAP1LC3B; this interaction contributes to the virus-induced degradation of mitochondria by autophagy, which leads to degradation of host MAVS and inhibition of type I interferon (IFN) responses. In terms of assembly, homodimer. Homotetramer; forms heterotetrameric Gn-Gc spikes in the pre-fusion conformation. Homotrimer; forms homotrimer in the post-fusion conformation at acidic pH. Interacts (via C-terminus) with the nucleoprotein. Envelope polyprotein precursor is quickly cleaved in vivo just after synthesis, presumably by host signal peptidase.

The protein resides in the virion membrane. Its subcellular location is the host cell surface. The protein localises to the host Golgi apparatus membrane. It localises to the host endoplasmic reticulum membrane. It is found in the host mitochondrion. Its function is as follows. Forms homotetramers with glycoprotein C at the surface of the virion. Attaches the virion to host cell receptors including integrin ITGAV/ITGB3. This attachment induces virion internalization predominantly through clathrin-dependent endocytosis. Mediates the assembly and budding of infectious virus particles through its interaction with the nucleocapsid protein and the viral genome. May dysregulate normal immune and endothelial cell responses through an ITAM motif. Translocates to mitochondria, binds to host TUFM and recruits MAP1LC3B. These interactions induce mitochondrial autophagy and therefore destruction of host MAVS leading to inhibition of type I interferon (IFN) responses. Concomitant breakdown of glycoprotein N is apparently prevented by the nucleoprotein that may inhibit Gn-stimulated autophagosome-lysosome fusion. Interacts with the viral genomic RNA. Forms homotetramers with glycoprotein N at the surface of the virion. Attaches the virion to host cell receptors including integrin ITGAV/ITGB3. This attachment induces virion internalization predominantly through clathrin-dependent endocytosis. Class II fusion protein that promotes fusion of viral membrane with host endosomal membrane after endocytosis of the virion. The protein is Envelopment polyprotein (GP) of Homo sapiens (Human).